Consider the following 35-residue polypeptide: Photosystem II reaction center protein T (35 aa).

The helical transmembrane segment at 3 to 23 (ALVYTFLLVSTLGIIFFAIFF) threads the bilayer.

Belongs to the PsbT family. In terms of assembly, PSII is composed of 1 copy each of membrane proteins PsbA, PsbB, PsbC, PsbD, PsbE, PsbF, PsbH, PsbI, PsbJ, PsbK, PsbL, PsbM, PsbT, PsbY, PsbZ, Psb30/Ycf12, at least 3 peripheral proteins of the oxygen-evolving complex and a large number of cofactors. It forms dimeric complexes.

The protein localises to the plastid. Its subcellular location is the chloroplast thylakoid membrane. In terms of biological role, found at the monomer-monomer interface of the photosystem II (PS II) dimer, plays a role in assembly and dimerization of PSII. PSII is a light-driven water plastoquinone oxidoreductase, using light energy to abstract electrons from H(2)O, generating a proton gradient subsequently used for ATP formation. The sequence is that of Photosystem II reaction center protein T from Ginkgo biloba (Ginkgo).